The primary structure comprises 837 residues: AdoMet-dependent rRNA methyltransferase SPB1 (837 aa).

S-adenosyl-L-methionine contacts are provided by G58, W60, D78, D94, and D119. Catalysis depends on K159, which acts as the Proton acceptor. Residues 345–390 (LNEEEQIEKELRDLQEKQKQKQKREKRRKNEEKQKELTRMQMNMLT) are a coiled coil. 4 disordered regions span residues 359 to 381 (QEKQ…QKEL), 483 to 529 (FRAK…DEDD), 573 to 644 (TDDV…TTKE), and 779 to 808 (TKKQ…KGIK). The span at 372-381 (RKNEEKQKEL) shows a compositional bias: basic and acidic residues. The span at 518 to 529 (ESDDSELSDEDD) shows a compositional bias: acidic residues. Residues 593 to 602 (SYNEMKKEDL) show a composition bias toward basic and acidic residues. Residues 603–635 (SDSSDEDSSSESDFEIVANDESDGDIDSDYDSD) show a composition bias toward acidic residues.

This sequence belongs to the class I-like SAM-binding methyltransferase superfamily. RNA methyltransferase RlmE family. SPB1 subfamily. Component of the nucleolar and nucleoplasmic pre-60S ribosomal particle.

The protein localises to the nucleus. It is found in the nucleolus. The catalysed reaction is a ribonucleotide in rRNA + S-adenosyl-L-methionine = a 2'-O-methylribonucleotide in rRNA + S-adenosyl-L-homocysteine + H(+). Functionally, required for proper assembly of pre-ribosomal particles during the biogenesis of the 60S ribosomal subunit. The protein is AdoMet-dependent rRNA methyltransferase SPB1 of Candida glabrata (strain ATCC 2001 / BCRC 20586 / JCM 3761 / NBRC 0622 / NRRL Y-65 / CBS 138) (Yeast).